The primary structure comprises 357 residues: S-adenosyl-L-methionine:benzoic acid/salicylic acid carboxyl methyltransferase 2 (357 aa).

Y18 contributes to the S-adenosyl-L-homocysteine binding site. Q25 is a binding site for benzoate. Residues C59, N64, D96, L97, S135, and F136 each contribute to the S-adenosyl-L-homocysteine site. A benzoate-binding site is contributed by W157. Positions 168, 254, 256, and 257 each coordinate Mg(2+). Q260 contacts benzoate.

Belongs to the methyltransferase superfamily. Type-7 methyltransferase family. In terms of tissue distribution, predominantly expressed in petal limbs and tubes of corollas.

The catalysed reaction is benzoate + S-adenosyl-L-methionine = methyl benzoate + S-adenosyl-L-homocysteine. It catalyses the reaction salicylate + S-adenosyl-L-methionine = methyl salicylate + S-adenosyl-L-homocysteine. The protein operates within aromatic compound metabolism. Functionally, converts benzoic acid into the volatile ester methyl benzoates. This scent, mostly produced in a rhythmical, diurnal manner, attracts the pollinators. In Petunia hybrida (Petunia), this protein is S-adenosyl-L-methionine:benzoic acid/salicylic acid carboxyl methyltransferase 2.